Consider the following 470-residue polypeptide: Probable E3 ubiquitin-protein ligase TRIML1 (470 aa).

Residues 22-63 (CFICLDYFSSPVTTECGHSFCLMCLLKSWEEHNTPLSCPECW) form an RING-type zinc finger. Coiled-coil stretches lie at residues 135–170 (SEAE…KERV) and 196–235 (KEEE…GKMI). Residues 273 to 470 (TELSLCHITG…NTDPLIICHI (198 aa)) enclose the B30.2/SPRY domain.

As to quaternary structure, interacts with USP5. In terms of tissue distribution, testis.

It carries out the reaction S-ubiquitinyl-[E2 ubiquitin-conjugating enzyme]-L-cysteine + [acceptor protein]-L-lysine = [E2 ubiquitin-conjugating enzyme]-L-cysteine + N(6)-ubiquitinyl-[acceptor protein]-L-lysine.. It functions in the pathway protein modification; protein ubiquitination. In terms of biological role, probable E3 ubiquitin-protein ligase which plays an important role in blastocyst development. Involved in progression of blastocyst stage and subsequent embryo development. The protein is Probable E3 ubiquitin-protein ligase TRIML1 (Triml1) of Mus musculus (Mouse).